The sequence spans 1083 residues: Rho GTPase-activating protein 39 (1083 aa).

S2 is subject to N-acetylserine. WW domains lie at 25-58 and 63-97; these read NTRL…PPAG and RTSE…RPQG. The tract at residues 110–154 is disordered; sequence KQNTESPRASAESSPGRGSSVSREGSTSSSLEPEPDTEKAQELPA. Over residues 117-141 the composition is skewed to low complexity; that stretch reads RASAESSPGRGSSVSREGSTSSSLE. S169 is subject to Phosphoserine. A disordered region spans residues 226–369; sequence AAQGNGYAPD…NKQGPPSPCQ (144 aa). Residues 245-256 show a composition bias toward polar residues; it reads PSGSQHSPSLQT. The span at 268–280 shows a compositional bias: basic and acidic residues; that stretch reads PERRPSPFLKRAE. 5 positions are modified to phosphoserine: S286, S384, S388, S406, and S407. Disordered stretches follow at residues 405–545 and 570–599; these read GSSP…EAEG and MKQR…PGPV. Composition is skewed to polar residues over residues 474–488 and 573–582; these read SWSS…TGYS and RSSWDSQQDG. 4 positions are modified to phosphoserine: S604, S690, S715, and S726. The 158-residue stretch at 722 to 879 folds into the MyTH4 domain; the sequence is WSSESIKKPM…PNVEEIRHAK (158 aa). Residues 890 to 1078 form the Rho-GAP domain; it reads SALQEVMGMQ…VLIQHLDTSF (189 aa).

Its subcellular location is the nucleus. The chain is Rho GTPase-activating protein 39 (ARHGAP39) from Homo sapiens (Human).